Reading from the N-terminus, the 167-residue chain is Protein tyrosine phosphatase type IVA 2 (167 aa).

The Tyrosine-protein phosphatase domain maps to 5 to 158; that stretch reads APVEISYENM…YRPKMRLRFR (154 aa). An intrachain disulfide couples Cys46 to Cys101. Asp69 serves as the catalytic Proton donor. Cys101 serves as the catalytic Phosphocysteine intermediate. 102–107 contributes to the phosphate binding site; the sequence is VAGLGR. Arg107 contributes to the substrate binding site. Cysteine methyl ester is present on Cys164. Cys164 carries S-farnesyl cysteine lipidation. Positions 165–167 are cleaved as a propeptide — removed in mature form; the sequence is CVQ.

Belongs to the protein-tyrosine phosphatase family. In terms of assembly, in contrast to PTP4A1 and PTP4A3, does not interact with tubulin. Interacts with RABGGTB. Farnesylated. Farnesylation is required for membrane targeting and for interaction with RABGGTB. As to expression, expressed in skeletal muscle, and at lower levels in liver, lung, heart, kidney, brain, testis and spleen.

It is found in the cell membrane. The protein localises to the early endosome. It localises to the cytoplasm. The enzyme catalyses O-phospho-L-tyrosyl-[protein] + H2O = L-tyrosyl-[protein] + phosphate. Inhibited by sodium orthovanadate and pentamidine. Its function is as follows. Protein tyrosine phosphatase which stimulates progression from G1 into S phase during mitosis. Inhibits geranylgeranyl transferase type II activity by blocking the association between RABGGTA and RABGGTB. The polypeptide is Protein tyrosine phosphatase type IVA 2 (Ptp4a2) (Mus musculus (Mouse)).